A 781-amino-acid chain; its full sequence is MAP7 domain-containing protein 2 (781 aa).

Residues 1 to 32 are compositionally biased toward gly residues; sequence MERSGGNGGGGGGGGGGGGGYGGSGGGGGGAG. Disordered stretches follow at residues 1–37, 50–87, 120–567, and 597–628; these read MERS…PSEG, AEAA…REER, LEEQ…AAKQ, and TRKS…ANKA. Basic and acidic residues-rich tracts occupy residues 71–87 and 120–158; these read LKSD…REER and LEEQ…RSLE. Residues 73 to 168 adopt a coiled-coil conformation; sequence SDERQRLAKE…RTQQLELKKK (96 aa). The segment covering 192-210 has biased composition (low complexity); that stretch reads LTLATSTPPLDTGTTTAAA. Composition is skewed to polar residues over residues 211 to 245 and 257 to 267; these read ESTN…TVAI and LKSSYKSSPTR. Residues 318–328 are compositionally biased toward basic and acidic residues; the sequence is RRCEPPEDISK. Positions 329 to 348 are enriched in polar residues; that stretch reads RLSSPVKSKITSKTYPQSPK. 4 stretches are compositionally biased toward basic and acidic residues: residues 370–387, 397–436, 453–567, and 597–613; these read ETPK…EKEG, PREE…EHSA, LAEK…AAKQ, and TRKS…DPKV.

This sequence belongs to the MAP7 family. Interacts (via N-terminus) with microtubules; facilitates microtubule stabilization. Interacts with kinesin-1 family members, KIF5A, KIF5B and KIF5C. Expressed predominantly in the glomerular layer of the olfactory bulb and Sertoli cells of the testis.

It is found in the cytoplasm. Its subcellular location is the cytoskeleton. It localises to the microtubule organizing center. The protein localises to the centrosome. The protein resides in the midbody. It is found in the cell projection. Its subcellular location is the neuron projection. It localises to the axon. In terms of biological role, microtubule-stabilizing protein involved in the control of cell motility and neurite outgrowth. Acts as a critical cofactor for kinesin transport; in the proximal axon regulates kinesin-1 family members, KIF5A, KIF5B and KIF5C recruitment to microtubules and contributes to kinesin-1-mediated transport in the axons. This is MAP7 domain-containing protein 2 (Map7d2) from Mus musculus (Mouse).